Consider the following 733-residue polypeptide: Centrosomal protein of 68 kDa (733 aa).

Residues 71–80 are compositionally biased toward basic and acidic residues; it reads SKEPVADRSK. Disordered stretches follow at residues 71–92, 150–207, and 222–244; these read SKEP…SASV, GLSQ…SFAN, and VVGA…DATG. Residues 178 to 190 are compositionally biased toward low complexity; sequence SSRSISASSVGSS. Over residues 231–241 the composition is skewed to polar residues; it reads GSAQPLTSGSD. Serine 315 is modified (phosphoserine). The interval 420-442 is disordered; it reads PQLKTKEKEPPFPRQKRGRQHVS. Serine 453 and serine 459 each carry phosphoserine. The disordered stretch occupies residues 497–571; it reads HSSLQVSDSD…KPLKTQPASK (75 aa). The segment covering 540-569 has biased composition (polar residues); it reads IQPQDSRGKSSLMSNQTLGVSSKPLKTQPA.

Interacts with CNTLN; the interaction recruits CEP68 to the centrosome. Interacts with the SCF(FBXW11) complex which contains SKP1, CUL1 and FBXW11; the interaction is probably mediated by FBXW11 and the complex also contains CDK5RAP2 and PCNT. Also interacts with F-box protein BTRC. Interacts with serine/threonine-protein kinase PLK1; the interaction leads to phosphorylation of CEP68 and its subsequent degradation. Interacts with NEK2; the interaction leads to phosphorylation of CEP68. Phosphorylation by PLK1 is required for binding to BTRC in prometaphase. Phosphorylated directly or indirectly by NEK2. NEK2-mediated phosphorylation promotes CEP68 dissociation from the centrosome and its degradation at the onset of mitosis. In terms of processing, ubiquitinated and targeted for proteasomal degradation in early mitosis by the SCF(BTRC) and/or SCF(FBXW11) E3 ubiquitin-protein ligase complexes. Degradation is complete by prometaphase and is required for removal of CDK5RAP2 from the peripheral pericentriolar material and subsequent centriole separation.

The protein resides in the cytoplasm. It localises to the cytoskeleton. The protein localises to the microtubule organizing center. It is found in the centrosome. Functionally, involved in maintenance of centrosome cohesion, probably as part of a linker structure which prevents centrosome splitting. Required for localization of CDK5RAP2 to the centrosome during interphase. Contributes to CROCC/rootletin filament formation. The sequence is that of Centrosomal protein of 68 kDa (Cep68) from Mus musculus (Mouse).